The sequence spans 104 residues: Flagellar hook-basal body complex protein FliE (104 aa).

This sequence belongs to the FliE family.

It is found in the bacterial flagellum basal body. This Salmonella typhi protein is Flagellar hook-basal body complex protein FliE.